Reading from the N-terminus, the 794-residue chain is Zinc finger protein 148 (794 aa).

Lysine 6 participates in a covalent cross-link: Glycyl lysine isopeptide (Lys-Gly) (interchain with G-Cter in SUMO2). The residue at position 51 (serine 51) is a Phosphoserine. Glycyl lysine isopeptide (Lys-Gly) (interchain with G-Cter in SUMO2) cross-links involve residues lysine 88, lysine 115, and lysine 132. The C2H2-type 1 zinc-finger motif lies at 171-193 (HVCEHCNAAFRTNYHLQRHVFIH). Threonine 194 carries the phosphothreonine modification. 2 C2H2-type zinc fingers span residues 199-221 (FQCS…EKIH) and 227-249 (FRCD…KRTH). Position 250 is a phosphoserine (serine 250). The segment at 255–278 (YQCEYCLQYFSRTDRVLKHKRMCH) adopts a C2H2-type 4 zinc-finger fold. Residue lysine 291 forms a Glycyl lysine isopeptide (Lys-Gly) (interchain with G-Cter in SUMO2) linkage. A disordered region spans residues 298 to 338 (EEDSGFSTSPKDNSLPKKKRQKTEKKSSGMDKESSLDKSDL). Phosphoserine occurs at positions 301 and 306. Lysine 308 participates in a covalent cross-link: Glycyl lysine isopeptide (Lys-Gly) (interchain with G-Cter in SUMO2). The span at 321–338 (EKKSSGMDKESSLDKSDL) shows a compositional bias: basic and acidic residues. Residue lysine 356 forms a Glycyl lysine isopeptide (Lys-Gly) (interchain with G-Cter in SUMO1); alternate linkage. Lysine 356 participates in a covalent cross-link: Glycyl lysine isopeptide (Lys-Gly) (interchain with G-Cter in SUMO2); alternate. Residue lysine 402 forms a Glycyl lysine isopeptide (Lys-Gly) (interchain with G-Cter in SUMO2) linkage. Serine 412 is modified (phosphoserine). Residues lysine 421 and lysine 424 each participate in a glycyl lysine isopeptide (Lys-Gly) (interchain with G-Cter in SUMO2) cross-link. Over residues 575-588 (SSEVPEVTQSENVG) the composition is skewed to polar residues. Residues 575 to 596 (SSEVPEVTQSENVGSSSQASSS) are disordered. Lysine 607 bears the N6-acetyllysine mark. Phosphoserine occurs at positions 665 and 784. Positions 775-794 (NDNRAGMTSSPDATTGQTFG) are disordered.

Belongs to the krueppel C2H2-type zinc-finger protein family. In terms of assembly, interacts with HNRNPDL. Interacts with the 5FMC complex; the interaction requires association with CHTOP. Interacts with CAVIN1. Sumoylated with SUMO2. Desumoylated by SENP3, resulting in the stimulation of transcription of its target genes.

It is found in the nucleus. Involved in transcriptional regulation. Represses the transcription of a number of genes including gastrin, stromelysin and enolase. Binds to the G-rich box in the enhancer region of these genes. The chain is Zinc finger protein 148 (ZNF148) from Bos taurus (Bovine).